Reading from the N-terminus, the 451-residue chain is UDP-N-acetylmuramoylalanine--D-glutamate ligase (451 aa).

119-125 (GSNGKTT) serves as a coordination point for ATP.

This sequence belongs to the MurCDEF family.

It localises to the cytoplasm. The catalysed reaction is UDP-N-acetyl-alpha-D-muramoyl-L-alanine + D-glutamate + ATP = UDP-N-acetyl-alpha-D-muramoyl-L-alanyl-D-glutamate + ADP + phosphate + H(+). It functions in the pathway cell wall biogenesis; peptidoglycan biosynthesis. Its function is as follows. Cell wall formation. Catalyzes the addition of glutamate to the nucleotide precursor UDP-N-acetylmuramoyl-L-alanine (UMA). This is UDP-N-acetylmuramoylalanine--D-glutamate ligase from Streptococcus agalactiae serotype III (strain NEM316).